The primary structure comprises 599 residues: Purine-uracil permease NCS1 (599 aa).

The next 12 membrane-spanning stretches (helical) occupy residues 140-160 (LWIG…LVDL), 164-184 (WWQG…PLVL), 218-238 (LVGC…IFLL), 257-277 (TSPL…CIVW), 293-313 (ILIS…GGFG), 327-347 (FWTL…TLAL), 363-383 (IIGQ…GVAV), 411-433 (TLLA…NVVA), 445-465 (FFTF…FQPW), 474-494 (FVYT…GIIL), 525-545 (YNVA…PGFL), and 560-580 (VVYD…YWII).

It belongs to the purine-cytosine permease (2.A.39) family. As to expression, expressed in roots, leaves, stems, flowers, siliques and seeds.

Its subcellular location is the plastid. It is found in the chloroplast envelope. The protein localises to the chloroplast membrane. Nucleobase-proton symporter that facilitates the uptake of nucleobases in the cells. Can transport adenine, guanine and uracil. Contributes to uracil import into plastids for plastidic uracil salvage which is essential for plant growth and development. This Arabidopsis thaliana (Mouse-ear cress) protein is Purine-uracil permease NCS1.